Here is a 940-residue protein sequence, read N- to C-terminus: MSDYKSTLNLPETEFPMRGNLANREPEMLKSWTENGLYQQIRESRKDAKPFILHDGPPYANGDIHIGHSVNKILKDIIIKSKTMSGFDAPYIPGWDCHGLPIELKVEQKVGKPGHKVTAAEFRQKCREYAAKQVDGQRDDFIRLGVFADWQNPYLTMDYSTEANIVRSLSKVIDNGHLHKGVKPVHWCTDCGSALAEAEVEYEDKMSPAIDVAFTVVDKPALLAKFGVNEYPHNISMVIWTTTPWTLPANRALAVGANVEYTLVEMVKEGQAQALVLATDLYESCVERFGAESHTVLGTVAGSDLELLRFNHPFYDFDVPVILGDHVTVDSGTGVVHTAPGHGQDDFVVGQKYGLEVANPVGDNGVYKPDTEIFAGLHVFKANKNVVELLEEKGALLNHVQIKHSYPHCWRHKTPIIFRATPQWFISMDQKGLRQQALGEIEQTQWIPDWGQSRIEKMVENRPDWCISRQRTWGVPITLFVHRETEELHPDSVSLMERVAARIEQEGIQAWWDLDASELLGDEADQYRKVTDTLDVWYDSGSTFSSVVAARPEFNGHPIDLYLEGSDQHRGWFMSSLMISTAMNGKAPYKQVLTHGFTVDGQGRKMSKSVGNVIAPQHVTNKLGADILRLWVAATDYSGEMTVSDQILNRSADAYRRIRNTARFLLANINGFNPETDMVAVEDMVALDRWVVRRAAALQQELLEAYDQYNFHLVTQKLMQFCSVELGSFYLDIIKDRQYTAKEDSNARRSCQSALYLISEAMVRWIAPILSFTADEIWKLLPGERGEYVFTETWYQGLQSVALESDLSDEYWDQLLAVRAEVNKVIENARREKQVGGSLEAEVTLYADEALQAVLENLGDELRFVLLTSKTEVVALAQAPSDAIETELASLKLSLKKSEAEKCERCWHHREDVGAVAEHPTLCTRCVTNIEGEGETRQFA.

The 'HIGH' region motif lies at 58–68 (PYANGDIHIGH). An L-isoleucyl-5'-AMP-binding site is contributed by glutamate 564. A 'KMSKS' region motif is present at residues 605-609 (KMSKS). Lysine 608 lines the ATP pocket. Zn(2+) contacts are provided by cysteine 903, cysteine 906, cysteine 923, and cysteine 926.

Belongs to the class-I aminoacyl-tRNA synthetase family. IleS type 1 subfamily. As to quaternary structure, monomer. Zn(2+) serves as cofactor.

It localises to the cytoplasm. The enzyme catalyses tRNA(Ile) + L-isoleucine + ATP = L-isoleucyl-tRNA(Ile) + AMP + diphosphate. Catalyzes the attachment of isoleucine to tRNA(Ile). As IleRS can inadvertently accommodate and process structurally similar amino acids such as valine, to avoid such errors it has two additional distinct tRNA(Ile)-dependent editing activities. One activity is designated as 'pretransfer' editing and involves the hydrolysis of activated Val-AMP. The other activity is designated 'posttransfer' editing and involves deacylation of mischarged Val-tRNA(Ile). This is Isoleucine--tRNA ligase from Shewanella pealeana (strain ATCC 700345 / ANG-SQ1).